A 734-amino-acid chain; its full sequence is Photosystem I P700 chlorophyll a apoprotein A2 (734 aa).

8 helical membrane passes run I46 to A69, L135 to Q158, L175 to I199, I273 to Y291, L330 to Y353, A369 to V395, A417 to H439, and F517 to V535. 2 residues coordinate [4Fe-4S] cluster: C559 and C568. A run of 2 helical transmembrane segments spans residues A575–W596 and L643–I665. Chlorophyll a-binding residues include H654, M662, and Y670. W671 contacts phylloquinone. Residues L707–A727 traverse the membrane as a helical segment.

Belongs to the PsaA/PsaB family. As to quaternary structure, the PsaA/B heterodimer binds the P700 chlorophyll special pair and subsequent electron acceptors. PSI consists of a core antenna complex that captures photons, and an electron transfer chain that converts photonic excitation into a charge separation. The eukaryotic PSI reaction center is composed of at least 11 subunits. P700 is a chlorophyll a/chlorophyll a' dimer, A0 is one or more chlorophyll a, A1 is one or both phylloquinones and FX is a shared 4Fe-4S iron-sulfur center. is required as a cofactor.

Its subcellular location is the plastid. The protein localises to the chloroplast thylakoid membrane. The enzyme catalyses reduced [plastocyanin] + hnu + oxidized [2Fe-2S]-[ferredoxin] = oxidized [plastocyanin] + reduced [2Fe-2S]-[ferredoxin]. PsaA and PsaB bind P700, the primary electron donor of photosystem I (PSI), as well as the electron acceptors A0, A1 and FX. PSI is a plastocyanin-ferredoxin oxidoreductase, converting photonic excitation into a charge separation, which transfers an electron from the donor P700 chlorophyll pair to the spectroscopically characterized acceptors A0, A1, FX, FA and FB in turn. Oxidized P700 is reduced on the lumenal side of the thylakoid membrane by plastocyanin. The protein is Photosystem I P700 chlorophyll a apoprotein A2 of Chlorokybus atmophyticus (Soil alga).